Here is a 155-residue protein sequence, read N- to C-terminus: UPF0251 protein Paes_1249 (155 aa).

The protein belongs to the UPF0251 family.

This is UPF0251 protein Paes_1249 from Prosthecochloris aestuarii (strain DSM 271 / SK 413).